Here is a 139-residue protein sequence, read N- to C-terminus: D-ribose pyranase (139 aa).

The active-site Proton donor is H20. Substrate contacts are provided by residues D28, H106, and 128-130 (YAN).

The protein belongs to the RbsD / FucU family. RbsD subfamily. In terms of assembly, homodecamer.

The protein resides in the cytoplasm. It carries out the reaction beta-D-ribopyranose = beta-D-ribofuranose. Its pathway is carbohydrate metabolism; D-ribose degradation; D-ribose 5-phosphate from beta-D-ribopyranose: step 1/2. In terms of biological role, catalyzes the interconversion of beta-pyran and beta-furan forms of D-ribose. In Vibrio vulnificus (strain CMCP6), this protein is D-ribose pyranase.